Consider the following 67-residue polypeptide: Probable Sec-independent protein translocase protein TatE (67 aa).

Residues 4–21 (ISITKLLVVAALVVLLFG) traverse the membrane as a helical segment. Positions 46-67 (EDAGAKKEAGGDIQAEKLSHKE) are disordered.

This sequence belongs to the TatA/E family. TatE subfamily.

The protein resides in the cell inner membrane. In terms of biological role, part of the twin-arginine translocation (Tat) system that transports large folded proteins containing a characteristic twin-arginine motif in their signal peptide across membranes. TatE shares overlapping functions with TatA. This Citrobacter koseri (strain ATCC BAA-895 / CDC 4225-83 / SGSC4696) protein is Probable Sec-independent protein translocase protein TatE.